We begin with the raw amino-acid sequence, 86 residues long: MAKEELLEMEGLVDEILPDSRYRITLDNGHKLIAYTAGRVKKNHIRILAGDKVSLEVSPYDLSKGRITFRHIDKKQSFAGAPYRRH.

The S1-like domain occupies 1 to 72; it reads MAKEELLEME…SKGRITFRHI (72 aa).

Belongs to the IF-1 family. Component of the 30S ribosomal translation pre-initiation complex which assembles on the 30S ribosome in the order IF-2 and IF-3, IF-1 and N-formylmethionyl-tRNA(fMet); mRNA recruitment can occur at any time during PIC assembly.

The protein resides in the cytoplasm. In terms of biological role, one of the essential components for the initiation of protein synthesis. Stabilizes the binding of IF-2 and IF-3 on the 30S subunit to which N-formylmethionyl-tRNA(fMet) subsequently binds. Helps modulate mRNA selection, yielding the 30S pre-initiation complex (PIC). Upon addition of the 50S ribosomal subunit IF-1, IF-2 and IF-3 are released leaving the mature 70S translation initiation complex. In Polynucleobacter asymbioticus (strain DSM 18221 / CIP 109841 / QLW-P1DMWA-1) (Polynucleobacter necessarius subsp. asymbioticus), this protein is Translation initiation factor IF-1 2.